A 295-amino-acid chain; its full sequence is Probable peptidyl-prolyl cis-trans isomerase B (295 aa).

Disordered regions lie at residues 105-128 (SADK…PATV) and 274-295 (IASG…LRLD). Positions 126–294 (ATVSASMATN…TEVTIESLRL (169 aa)) constitute a PPIase cyclophilin-type domain.

This sequence belongs to the cyclophilin-type PPIase family.

It catalyses the reaction [protein]-peptidylproline (omega=180) = [protein]-peptidylproline (omega=0). Functionally, PPIases accelerate the folding of proteins. It catalyzes the cis-trans isomerization of proline imidic peptide bonds in oligopeptides. The protein is Probable peptidyl-prolyl cis-trans isomerase B (ppiB) of Mycobacterium leprae (strain TN).